Reading from the N-terminus, the 137-residue chain is Nucleoside diphosphate kinase (137 aa).

5 residues coordinate ATP: Lys-9, Phe-57, Arg-85, Thr-91, and Arg-102. The active-site Pros-phosphohistidine intermediate is the His-119.

This sequence belongs to the NDK family. As to quaternary structure, homotetramer. Requires Mg(2+) as cofactor.

It is found in the cytoplasm. The enzyme catalyses a 2'-deoxyribonucleoside 5'-diphosphate + ATP = a 2'-deoxyribonucleoside 5'-triphosphate + ADP. It catalyses the reaction a ribonucleoside 5'-diphosphate + ATP = a ribonucleoside 5'-triphosphate + ADP. Functionally, major role in the synthesis of nucleoside triphosphates other than ATP. The ATP gamma phosphate is transferred to the NDP beta phosphate via a ping-pong mechanism, using a phosphorylated active-site intermediate. The sequence is that of Nucleoside diphosphate kinase from Streptococcus thermophilus (strain CNRZ 1066).